The following is a 130-amino-acid chain: Putative protein ZNF815 (130 aa).

This is Putative protein ZNF815 (ZNF815P) from Homo sapiens (Human).